The sequence spans 109 residues: Large ribosomal subunit protein uL22 (109 aa).

The protein belongs to the universal ribosomal protein uL22 family. As to quaternary structure, part of the 50S ribosomal subunit.

Its function is as follows. This protein binds specifically to 23S rRNA; its binding is stimulated by other ribosomal proteins, e.g. L4, L17, and L20. It is important during the early stages of 50S assembly. It makes multiple contacts with different domains of the 23S rRNA in the assembled 50S subunit and ribosome. In terms of biological role, the globular domain of the protein is located near the polypeptide exit tunnel on the outside of the subunit, while an extended beta-hairpin is found that lines the wall of the exit tunnel in the center of the 70S ribosome. In Leptothrix cholodnii (strain ATCC 51168 / LMG 8142 / SP-6) (Leptothrix discophora (strain SP-6)), this protein is Large ribosomal subunit protein uL22.